Consider the following 865-residue polypeptide: Fanconi-associated nuclease 1 homolog (865 aa).

The segment at 35 to 62 (GKICPLCETKFSLASYKSHMNTCNVADD) adopts a UBZ4-type zinc-finger fold. The Zn(2+) site is built by Cys-38, Cys-41, His-53, and Cys-57. Disordered regions lie at residues 90 to 140 (DASF…SLDV) and 162 to 187 (RRSSRLLQNSQKDQADNANKEDPVKK). 2 stretches are compositionally biased toward basic and acidic residues: residues 93 to 112 (FSDKSENPTKRRKTDEREVP) and 174 to 187 (DQADNANKEDPVKK). Mn(2+) contacts are provided by Glu-682, Asp-810, Glu-825, and Val-826. Positions 744-857 (QELIEENIRK…GIRAEVCHVA (114 aa)) constitute a VRR-NUC domain.

It belongs to the FAN1 family. Requires Mn(2+) as cofactor. The cofactor is Mg(2+).

Its subcellular location is the nucleus. It catalyses the reaction Hydrolytically removes 5'-nucleotides successively from the 3'-hydroxy termini of 3'-hydroxy-terminated oligonucleotides.. Nuclease required for the repair of DNA interstrand cross-links (ICL). Acts as a 5'-3' exonuclease that anchors at a cut end of DNA and cleaves DNA successively at every third nucleotide, allowing to excise an ICL from one strand through flanking incisions. The protein is Fanconi-associated nuclease 1 homolog (fan-1) of Caenorhabditis elegans.